The primary structure comprises 664 residues: Cyclic nucleotide-gated channel alpha-2 (664 aa).

Polar residues predominate over residues 1–10; it reads MMTEKSNGVK. A disordered region spans residues 1–61; that stretch reads MMTEKSNGVK…LQRLAEMDTP (61 aa). Residues 1–146 are Cytoplasmic-facing; it reads MMTEKSNGVK…PAGDWYYRWL (146 aa). A helical membrane pass occupies residues 147 to 168; the sequence is FVIAMPVLYNWCLLVARACFSD. The Extracellular portion of the chain corresponds to 169-178; the sequence is LQRNYFVVWL. The chain crosses the membrane as a helical span at residues 179-199; the sequence is VLDYFSDTVYIADLIIRLRTG. Residues 200 to 224 lie on the Cytoplasmic side of the membrane; the sequence is FLEQGLLVKDPKKLRDNYIHTLQFK. The chain crosses the membrane as a helical span at residues 225–243; it reads LDVASIIPTDLIYFAVGIH. Residues 244-248 lie on the Extracellular side of the membrane; the sequence is SPEVR. Residues 249-267 traverse the membrane as a helical segment; that stretch reads FNRLLHFARMFEFFDRTET. Over 268 to 274 the chain is Cytoplasmic; sequence RTSYPNI. Residues 272–380 form an ion conduction pathway region; that stretch reads PNIFRISNLV…GNVGSMISNM (109 aa). Residues 275-298 traverse the membrane as a helical segment; that stretch reads FRISNLVLYILVIIHWNACIYYAI. Over 299-321 the chain is Extracellular; it reads SKSIGFGVDTWVYPNITDPEYGY. A run of 2 helical transmembrane segments spans residues 322-356 and 357-381; these read LARE…LFVI and FDFL…SNMN. Positions 339–342 are selectivity filter; it reads TIGE. A C-linker region spans residues 382 to 458; it reads ATRAEFQAKI…STLKKVRIFQ (77 aa). The Cytoplasmic portion of the chain corresponds to 382–664; the sequence is ATRAEFQAKI…INTPEPAVAE (283 aa). Residues 462-582 are cyclic nucleotide-binding domain; the sequence is AGLLVELVLK…EERGREILMK (121 aa). 3',5'-cyclic GMP-binding residues include G522, S525, R538, and T539. The 3',5'-cyclic AMP site is built by R538 and T539. Residues 599–653 adopt a coiled-coil conformation; the sequence is VQEKLEQLETNMETLYTRFARLLAEYTGAQQKLKQRITVLETKMKQNHEDDYLSD.

It belongs to the cyclic nucleotide-gated cation channel (TC 1.A.1.5) family. CNGA2 subfamily. As to quaternary structure, the olfactory cyclic nucleotide-gated channel is an heterotetramer composed of CNGA2, CNGA4 and CNGB1b subunits with 2:1:1 stoichiometry.

Its subcellular location is the cell projection. The protein resides in the cilium membrane. It catalyses the reaction Ca(2+)(in) = Ca(2+)(out). The catalysed reaction is Na(+)(in) = Na(+)(out). It carries out the reaction K(+)(in) = K(+)(out). The enzyme catalyses NH4(+)(in) = NH4(+)(out). It catalyses the reaction Rb(+)(in) = Rb(+)(out). The catalysed reaction is Li(+)(in) = Li(+)(out). It carries out the reaction Cs(+)(in) = Cs(+)(out). Functionally, pore-forming subunit of the olfactory cyclic nucleotide-gated channel. Operates in the cilia of olfactory sensory neurons where chemical stimulation of the odorant is converted to an electrical signal. Mediates odorant-induced cAMP-dependent Ca(2+) influx triggering neuron depolarization. The rise of intracellular Ca(2+) levels potentiates the olfactory response by activating Ca(2+)-dependent Cl(-) channels, but it also serves as a negative feedback signal to desensitize the channel for rapid adaptation to odorants. Conducts cAMP- and cGMP-gated ion currents, with permeability for monovalent and divalent cations. The polypeptide is Cyclic nucleotide-gated channel alpha-2 (Mus musculus (Mouse)).